The primary structure comprises 365 residues: Sulfate/thiosulfate import ATP-binding protein CysA (365 aa).

In terms of domain architecture, ABC transporter spans 3 to 237 (IEIANIKKSF…PATRFVLEFM (235 aa)). 35-42 (GPSGSGKT) contacts ATP.

It belongs to the ABC transporter superfamily. Sulfate/tungstate importer (TC 3.A.1.6) family. In terms of assembly, the complex is composed of two ATP-binding proteins (CysA), two transmembrane proteins (CysT and CysW) and a solute-binding protein (CysP).

Its subcellular location is the cell inner membrane. The enzyme catalyses sulfate(out) + ATP + H2O = sulfate(in) + ADP + phosphate + H(+). It catalyses the reaction thiosulfate(out) + ATP + H2O = thiosulfate(in) + ADP + phosphate + H(+). Its function is as follows. Part of the ABC transporter complex CysAWTP involved in sulfate/thiosulfate import. Responsible for energy coupling to the transport system. The protein is Sulfate/thiosulfate import ATP-binding protein CysA of Escherichia coli (strain K12).